Consider the following 319-residue polypeptide: Malate dehydrogenase (319 aa).

NAD(+) contacts are provided by residues 10–15 and aspartate 34; that span reads GAGQIG. Arginine 85 and arginine 91 together coordinate substrate. Residues asparagine 98 and 121-123 contribute to the NAD(+) site; that span reads ITN. Residues asparagine 123 and arginine 154 each coordinate substrate. Histidine 178 functions as the Proton acceptor in the catalytic mechanism.

It belongs to the LDH/MDH superfamily. MDH type 3 family.

It catalyses the reaction (S)-malate + NAD(+) = oxaloacetate + NADH + H(+). In terms of biological role, catalyzes the reversible oxidation of malate to oxaloacetate. In Rhodospirillum centenum (strain ATCC 51521 / SW), this protein is Malate dehydrogenase.